The following is a 201-amino-acid chain: Proteinase inhibitor type-2 CEVI57 (201 aa).

Positions 1 to 23 are cleaved as a signal peptide; the sequence is MAVYKVSFLAHLLVLGMYLLVST. Tandem repeats lie at residues 27–83, 84–143, and 144–199. 8 cysteine pairs are disulfide-bonded: Cys30/Cys118, Cys34/Cys114, Cys42/Cys124, Cys54/Cys91, Cys57/Cys75, Cys58/Cys87, Cys64/Cys100, and Cys117/Cys135.

This sequence belongs to the protease inhibitor I20 (potato type II proteinase inhibitor) family.

This chain is Proteinase inhibitor type-2 CEVI57 (CEVI57), found in Solanum lycopersicum (Tomato).